A 749-amino-acid polypeptide reads, in one-letter code: 5-methyltetrahydropteroyltriglutamate--homocysteine methyltransferase (749 aa).

5-methyltetrahydropteroyltri-L-glutamate contacts are provided by residues 15–18 (RELK) and Lys114. Residues 425 to 427 (IGS) and Glu478 each bind L-homocysteine. L-methionine-binding positions include 425–427 (IGS) and Glu478. Trp555 contacts 5-methyltetrahydropteroyltri-L-glutamate. Position 593 (Asp593) interacts with L-homocysteine. Asp593 contacts L-methionine. Residue Glu599 participates in 5-methyltetrahydropteroyltri-L-glutamate binding. The Zn(2+) site is built by His636, Cys638, and Glu660. Residue His689 is the Proton donor of the active site. Cys721 provides a ligand contact to Zn(2+).

This sequence belongs to the vitamin-B12 independent methionine synthase family. The cofactor is Zn(2+).

The catalysed reaction is 5-methyltetrahydropteroyltri-L-glutamate + L-homocysteine = tetrahydropteroyltri-L-glutamate + L-methionine. Its pathway is amino-acid biosynthesis; L-methionine biosynthesis via de novo pathway; L-methionine from L-homocysteine (MetE route): step 1/1. Functionally, catalyzes the transfer of a methyl group from 5-methyltetrahydrofolate to homocysteine resulting in methionine formation. In Streptococcus pneumoniae serotype 4 (strain ATCC BAA-334 / TIGR4), this protein is 5-methyltetrahydropteroyltriglutamate--homocysteine methyltransferase.